Here is an 835-residue protein sequence, read N- to C-terminus: Replication origin-binding protein (835 aa).

Positions 54-215 constitute a Helicase ATP-binding domain; sequence PGMSQTRPVT…SGLRGDENIH (162 aa). 67–74 serves as a coordination point for ATP; sequence APMGSGKT.

It belongs to the herpesviridae OriBP family. In terms of assembly, homodimer. Interacts with the major DNA-binding protein. Interacts with the helicase/primase component 52 and the polymerase accessory protein.

It is found in the host nucleus. In terms of biological role, functions as a docking protein to recruit essential components of the viral replication machinery to viral DNA origins. In the presence of the major DNA-binding protein, opens dsDNA leading to a conformational change in the origin that facilitates DNA unwinding and subsequent replication. The protein is Replication origin-binding protein of Homo sapiens (Human).